A 99-amino-acid chain; its full sequence is uncharacterized protein (99 aa).

This is an uncharacterized protein from Escherichia coli O157:H7.